The chain runs to 132 residues: Peptide methionine sulfoxide reductase MsrB (132 aa).

A MsrB domain is found at 9–131; it reads DAQWRAELSP…NSASLSFHPK (123 aa). Zn(2+)-binding residues include cysteine 48, cysteine 51, cysteine 97, and cysteine 100. Cysteine 120 acts as the Nucleophile in catalysis.

This sequence belongs to the MsrB Met sulfoxide reductase family. Requires Zn(2+) as cofactor.

It carries out the reaction L-methionyl-[protein] + [thioredoxin]-disulfide + H2O = L-methionyl-(R)-S-oxide-[protein] + [thioredoxin]-dithiol. The protein is Peptide methionine sulfoxide reductase MsrB of Thiobacillus denitrificans (strain ATCC 25259 / T1).